We begin with the raw amino-acid sequence, 390 residues long: Neutrophil cytosol factor 1 (390 aa).

The PX domain occupies 4-125 (TFIRHIALLG…DFFKVRPDDL (122 aa)). SH3 domains are found at residues 156-215 (IILQ…PLDS) and 226-285 (YAGE…KAGE). Positions 291 to 390 (QRQIRGRGAP…STKRKLTSAV (100 aa)) are disordered. A phosphoserine mark is found at S304, S321, S329, and S346. The span at 374–383 (ILHRCTESTK) shows a compositional bias: basic and acidic residues.

In terms of assembly, component of the phagocyte NADPH oxidase complex composed of an obligatory core heterodimer formed by the membrane proteins CYBA and CYBB and the cytosolic regulatory subunits NCF1/p47-phox, NCF2/p67-phox, NCF4/p40-phox and the small GTPase RAC1 or RAC2. Part of a cytosolic complex composed at least by NCF1, NCF2 and NCF4. Interacts (via C-terminus) with NCF2 (via the C-terminal SH3 domain). Interacts with NCF4. Interacts with CYBB. Interacts (via the second SH3 domain) with CYBA; interaction is phosphorylation-dependent. Interacts with NOXA1. Interacts with ADAM15. Interacts with TRAF4. Interacts with FASLG. Interacts with PARK7 (via C-terminus); the interaction is enhanced by LPS and modulates NCF1 phosphorylation and membrane translocation. Phosphorylated by PRKCD; phosphorylation induces activation of NCF1, leading to assembly and activation of the NADPH oxidase complex.

It is found in the cytoplasm. It localises to the cytosol. The protein localises to the membrane. Subunit of the phagocyte NADPH oxidase complex that mediates the transfer of electrons from cytosolic NADPH to O2 to produce the superoxide anion (O2(-)). In the activated complex, electrons are first transferred from NADPH to flavin adenine dinucleotide (FAD) and subsequently transferred via two heme molecules to molecular oxygen, producing superoxide through an outer-sphere reaction. Activation of the NADPH oxidase complex is initiated by the assembly of cytosolic subunits of the NADPH oxidase complex with the core NADPH oxidase complex to form a complex at the plasma membrane or phagosomal membrane. This activation process is initiated by phosphorylation dependent binding of the cytosolic NCF1/p47-phox subunit to the C-terminus of CYBA/p22-phox. The protein is Neutrophil cytosol factor 1 of Mus musculus (Mouse).